The chain runs to 386 residues: Glucose-1-phosphate adenylyltransferase (386 aa).

Residues Tyr-100, Gly-165, 180-181 (EK), and Ser-191 each bind alpha-D-glucose 1-phosphate.

Belongs to the bacterial/plant glucose-1-phosphate adenylyltransferase family. In terms of assembly, homotetramer.

It carries out the reaction alpha-D-glucose 1-phosphate + ATP + H(+) = ADP-alpha-D-glucose + diphosphate. Its pathway is glycan biosynthesis; glycogen biosynthesis. Involved in the biosynthesis of ADP-glucose, a building block required for the elongation reactions to produce glycogen. Catalyzes the reaction between ATP and alpha-D-glucose 1-phosphate (G1P) to produce pyrophosphate and ADP-Glc. The protein is Glucose-1-phosphate adenylyltransferase of Clostridium botulinum (strain Eklund 17B / Type B).